Consider the following 122-residue polypeptide: Small ribosomal subunit protein uS13 (122 aa).

The disordered stretch occupies residues 95–122 (GLPVRGQRTKTNARTRKGPKKTIAGKKK).

It belongs to the universal ribosomal protein uS13 family. Part of the 30S ribosomal subunit. Forms a loose heterodimer with protein S19. Forms two bridges to the 50S subunit in the 70S ribosome.

In terms of biological role, located at the top of the head of the 30S subunit, it contacts several helices of the 16S rRNA. In the 70S ribosome it contacts the 23S rRNA (bridge B1a) and protein L5 of the 50S subunit (bridge B1b), connecting the 2 subunits; these bridges are implicated in subunit movement. Contacts the tRNAs in the A and P-sites. In Corynebacterium diphtheriae (strain ATCC 700971 / NCTC 13129 / Biotype gravis), this protein is Small ribosomal subunit protein uS13.